The primary structure comprises 465 residues: Ribulose bisphosphate carboxylase large chain (465 aa).

Lysine 4 carries the post-translational modification N6,N6,N6-trimethyllysine. Substrate is bound by residues asparagine 113 and threonine 163. Lysine 165 acts as the Proton acceptor in catalysis. Substrate is bound at residue lysine 167. Mg(2+) is bound by residues lysine 191, aspartate 193, and glutamate 194. The residue at position 191 (lysine 191) is an N6-carboxylysine. Catalysis depends on histidine 284, which acts as the Proton acceptor. The substrate site is built by arginine 285, histidine 317, and serine 369.

Belongs to the RuBisCO large chain family. Type I subfamily. As to quaternary structure, heterohexadecamer of 8 large chains and 8 small chains; disulfide-linked. The disulfide link is formed within the large subunit homodimers. Mg(2+) serves as cofactor. In terms of processing, the disulfide bond which can form in the large chain dimeric partners within the hexadecamer appears to be associated with oxidative stress and protein turnover.

It localises to the plastid. Its subcellular location is the chloroplast. The catalysed reaction is 2 (2R)-3-phosphoglycerate + 2 H(+) = D-ribulose 1,5-bisphosphate + CO2 + H2O. The enzyme catalyses D-ribulose 1,5-bisphosphate + O2 = 2-phosphoglycolate + (2R)-3-phosphoglycerate + 2 H(+). Its function is as follows. RuBisCO catalyzes two reactions: the carboxylation of D-ribulose 1,5-bisphosphate, the primary event in carbon dioxide fixation, as well as the oxidative fragmentation of the pentose substrate in the photorespiration process. Both reactions occur simultaneously and in competition at the same active site. The protein is Ribulose bisphosphate carboxylase large chain of Securidaca diversifolia (Easter flower).